A 1006-amino-acid polypeptide reads, in one-letter code: MAEQESLEFGKADFVLMDTVSMPEFMANLRLRFEKGRIYTFIGEVVVSVNPYKVLNIYGRDTIEQYKGRELYERPPHLFAIADAAYKAMKRRSKDTCIMISGESGAGKTEASKYIMQYIAAITNPSQRAEIERVKNMLLKSNCVLEAFGNAKTNRNDNSSRFGKYMDINFDFKGDPIGGHINNYLLEKSRVIVQQPGERSFHSFYQLLQGGSEQMLHSLHLQKSLSSYNYIRVGAQLKSSINDAAEFKVVADAMKVIGFKPEEIQTVYKILAAILHLGNLKFIVDGDTPLIENGKVVSVIAELLSTKADMVEKALLYRTVATGRDIIDKQHTEQEASYGRDAFAKAIYERLFCWIVTRINDIIEVKNYDTTVHGKNTVIGVLDIYGFEIFDNNSFEQFCINYCNEKLQQLFIQLVLKQEQEEYQREGIPWKHIDYFNNQIIVDLVEQQHKGIIAILDDACMNVGKVTDGMFLEALNSKLGKHGHFSSRKTCASDKILEFDRDFRIRHYAGDVVYSVIGFIDKNKDTLFQDFKRLMYNSSNPVLKNMWPEGKLSITEVTKRPLTAATLFKNSMIALVDNLASKEPYYVRCIKPNDKKSPQIFDDERCRHQVEYLGLLENVRVRRAGFAFRQTYEKFLHRYKMISEFTWPNHDLPSDKEAVKKLIERCGFQDDVAYGKTKIFIRTPRTLFTLEELRAQMLVRVVLFLQKVWRGTLARMRYKRTKAALTIIRYYRRYKVKSYIHEVARRFHGVKNMRDYGKHVKWPTPPKVLRRFEEALQSIFNRWRASQLIKTIPASDLPQVRAKVAAMEMLKGQRADLGLQRAWEGNYLASKPDTPQTSGTFVPVANELKRKDKYMNVLFSCHVRKVNRFSKVEDRAIFVTDRHLYKMDPTKQYKVMKTIPLYNLTGLSVSNGKDQLVVFHTKDNKDLIVCLFSKQPTHESRIGELVGVLVNHFKSEKRHLQVNVTNPVQCSLHGKKCTVSVETRLNQPQPDFTKNRSGFILSVPGN.

Residue alanine 2 is modified to N-acetylalanine. Residues 9–695 (FGKADFVLMD…TLFTLEELRA (687 aa)) enclose the Myosin motor domain. 102-109 (GESGAGKT) lines the ATP pocket. Phosphoserine is present on serine 200. Tyrosine 536 bears the Phosphotyrosine mark. An actin-binding region spans residues 572-594 (MIALVDNLASKEPYYVRCIKPND). IQ domains follow at residues 699-719 (VRVV…MRYK) and 721-741 (TKAA…SYIH). An interaction with calmodulin region spans residues 776 to 896 (LQSIFNRWRA…MDPTKQYKVM (121 aa)). Positions 812 to 1005 (GQRADLGLQR…RSGFILSVPG (194 aa)) constitute a TH1 domain.

This sequence belongs to the TRAFAC class myosin-kinesin ATPase superfamily. Myosin family. In terms of assembly, interacts (via the two IQ motifs) with calmodulin. Binds an additional calmodulin chain via a third, C-terminal region. Interacts with F-actin. As to expression, detected on tracheal epithelial cells, and on epithelial cells and brush border cells in duodenum, jejunum and ileum. Detected on myelinated white matter in the cerebellum, and the myelinated part of the optic nerve. Detected on mature oligodendrocites. Detected on the outside of the myelin sheet that surrounds axons (at protein level). Ubiquitous. Highest levels in adult brain, and spinal cord. Moderate levels in lung, kidney, liver and spleen. Low levels in testis and heart (at protein level).

The protein localises to the cytoplasm. The protein resides in the perikaryon. It is found in the cell projection. Its subcellular location is the dendrite. It localises to the early endosome. The protein localises to the cell cortex. Functionally, unconventional myosin that functions as actin-based motor protein with ATPase activity. Plays a role in endosomal protein trafficking, and especially in the transfer of cargo proteins from early to recycling endosomes. Required for normal planar cell polarity in ciliated tracheal cells, for normal rotational polarity of cilia, and for coordinated, unidirectional ciliary movement in the trachea. Required for normal, polarized cilia organization in brain ependymal epithelial cells. The sequence is that of Unconventional myosin-Id (Myo1d) from Rattus norvegicus (Rat).